A 37-amino-acid polypeptide reads, in one-letter code: Hemocyanin subunit B (37 aa).

It belongs to the tyrosinase family. Hemocyanin subfamily. In terms of tissue distribution, hemolymph.

The protein resides in the secreted. The protein localises to the extracellular space. Hemocyanins are copper-containing oxygen carriers occurring freely dissolved in the hemolymph of many mollusks and arthropods. This Cancer pagurus (Rock crab) protein is Hemocyanin subunit B.